A 355-amino-acid polypeptide reads, in one-letter code: Thiamine thiazole synthase, chloroplastic (355 aa).

The transit peptide at 1–42 (MAAMATTASSLLKTSFAGARLPAAARNPTVSVAPRTGGAICN) directs the protein to the chloroplast. Substrate contacts are provided by residues A96, 116 to 117 (EQ), G124, and V189. 2,3-didehydroalanine (Cys) is present on C218. Substrate is bound by residues D220, H235, M287, and 297 to 299 (RMG).

The protein belongs to the THI4 family. Homooctamer. Fe cation serves as cofactor. Post-translationally, during the catalytic reaction, a sulfide is transferred from Cys-218 to a reaction intermediate, generating a dehydroalanine residue.

The protein resides in the plastid. It localises to the chloroplast. It carries out the reaction [ADP-thiazole synthase]-L-cysteine + glycine + NAD(+) = [ADP-thiazole synthase]-dehydroalanine + ADP-5-ethyl-4-methylthiazole-2-carboxylate + nicotinamide + 3 H2O + 2 H(+). Functionally, involved in biosynthesis of the thiamine precursor thiazole. Catalyzes the conversion of NAD and glycine to adenosine diphosphate 5-(2-hydroxyethyl)-4-methylthiazole-2-carboxylic acid (ADT), an adenylated thiazole intermediate. The reaction includes an iron-dependent sulfide transfer from a conserved cysteine residue of the protein to a thiazole intermediate. The enzyme can only undergo a single turnover, which suggests it is a suicide enzyme. May have additional roles in adaptation to various stress conditions and in DNA damage tolerance. Required fot thiamine accumulation and disease resistance toward the bacterial pathogen Xanthomonas oryzae pv oryzae (Xoo) and the fungal pathogen Magnaporthe oryzae. During infection by Xoo, functions positively in the defense pathway initiated by the resistance genes XA3 and XA26 by promoting thiamine synthesis. May function upstream of the defense-related proteins peroxidases, phenylalanine ammonia-lyases and pathogenesis-related proteins. (Microbial infection) During infection by Xanthomonas oryzae pv oryzae (Xoo), THI1 interacts with the type III effector virulence factor xadA from Xoo, which is an adhesin-like outer membrane protein. This probably attenuates the function of THI1 in defense response. The sequence is that of Thiamine thiazole synthase, chloroplastic from Oryza sativa subsp. japonica (Rice).